We begin with the raw amino-acid sequence, 133 residues long: Small ribosomal subunit protein uS8 (133 aa).

It belongs to the universal ribosomal protein uS8 family. In terms of assembly, part of the 30S ribosomal subunit. Contacts proteins S5 and S12.

Functionally, one of the primary rRNA binding proteins, it binds directly to 16S rRNA central domain where it helps coordinate assembly of the platform of the 30S subunit. The sequence is that of Small ribosomal subunit protein uS8 from Prochlorococcus marinus (strain MIT 9515).